A 310-amino-acid chain; its full sequence is MNEKNNAVNQAGRHTSAPSPAAGFEVLLITGMSGAGRSHAANSIEDMGWYVVDNMPPKLLVPLVDMMTSSGSNIHKLAAVIDVRSRDYFDDLSAVLSHLDDLGVKTRILFLDASNEVLIKRYESVRRPHPLQQGNRLIDGILEERDLLKNLKEHADIVIDTSALSIHQLSTKLYEGLLGSGPTTVSVHIFSFGFKYGIPIDADFVADVRFLPNPFWVPELRSLTGKDKPVSDYVLSSEGAEEFLDAYEKAIAIAIEGYAQEDKHYVTIAFGCTGGQHRSVAMSEALAKRLRARGLTVSVSARELDKRSAD.

31-38 (GMSGAGRS) contacts ATP. 82–85 (DVRS) is a GTP binding site.

It belongs to the RapZ-like family.

Functionally, displays ATPase and GTPase activities. The chain is Nucleotide-binding protein BAD_0837 from Bifidobacterium adolescentis (strain ATCC 15703 / DSM 20083 / NCTC 11814 / E194a).